The primary structure comprises 350 residues: NADH-cytochrome b5 reductase 2 (350 aa).

Residues 43 to 63 (PLVLALGGVAGIGAWYGLGGF) traverse the membrane as a helical segment. The FAD-binding FR-type domain occupies 96-204 (DQFVEFTLKE…KGPIAKFAYK (109 aa)). 207 to 242 (EFESIGMIAGGSGITPMYQVIQDIASNPSDKTKVTL) serves as a coordination point for FAD.

It belongs to the flavoprotein pyridine nucleotide cytochrome reductase family. The cofactor is FAD.

Its subcellular location is the mitochondrion outer membrane. The enzyme catalyses 2 Fe(III)-[cytochrome b5] + NADH = 2 Fe(II)-[cytochrome b5] + NAD(+) + H(+). Its function is as follows. May mediate the reduction of outer membrane cytochrome b5. The sequence is that of NADH-cytochrome b5 reductase 2 (MCR1) from Mycosarcoma maydis (Corn smut fungus).